The primary structure comprises 557 residues: MPSDIEIARAATLKPIAQVAEKLGIPDDALHNYGKHIAKIDHGYIAGLESRKPGKLVLVTAISPTPAGEGKTTTTVGLGDALNRIGEKTMICLREPSLGPCFGMKGGAAGGGKAQVVPMEQINLHFTGDFHAITSAHSLAAALIDNHVYWANELNIDVRRIHWRRVVDMNDRALRAITQSLGGVANGFPREDGFDITVASEVMAVFCLAKDLADLEERLGRIVIAETRDRKLVTLKDVKATGAMTVLLKDALQPNLVQTLEGNPALIHGGPFANIAHGCNSVIATRAGLRLADYTVTEAGFGADLGAEKFLDIKCRQAGLTPSAVVVVATIRALKMHGGVDKKNLGAENIDALEKGFANLARHVTNLRGFGLPVVVGVNHFHADTEAEHAKLKELCRERLDVEAITCRHWAEGGAGAEELARAVVKLSQAEPAPIRHAYETESRLTDKIRAIATKLYGAADIQIETKAAGKLATFEKDGYGHLPICMAKTQYSFSTDPTLMGAPEGHIVGVRDVRLSAGAGFVVAICGEIMTMPGLPRVPAADTIRLDANGQIDGLF.

65–72 (TPAGEGKT) contacts ATP.

The protein belongs to the formate--tetrahydrofolate ligase family.

The enzyme catalyses (6S)-5,6,7,8-tetrahydrofolate + formate + ATP = (6R)-10-formyltetrahydrofolate + ADP + phosphate. It functions in the pathway one-carbon metabolism; tetrahydrofolate interconversion. This chain is Formate--tetrahydrofolate ligase, found in Methylobacterium radiotolerans (strain ATCC 27329 / DSM 1819 / JCM 2831 / NBRC 15690 / NCIMB 10815 / 0-1).